The chain runs to 681 residues: Transcriptional regulator prz1 (681 aa).

Over residues 1-15 the composition is skewed to basic and acidic residues; sequence MERQRSEEANRRFKD. 5 disordered regions span residues 1–29, 66–96, 340–372, 410–433, and 520–563; these read MERQ…SKPD, NPSK…DSYP, SHQS…NSPF, PQIN…ANPL, and KIEN…AKSE. 2 stretches are compositionally biased toward polar residues: residues 66–86 and 340–358; these read NPSK…FKTS and SHQS…LNSE. A compositionally biased stretch (low complexity) spans 416–428; that stretch reads PSSPSKSQSGPSL. The segment covering 528-549 has biased composition (polar residues); sequence SNDYLSVRNTRPRSRSLNSLVG. A phosphoserine mark is found at serine 543 and serine 546. Positions 550 to 559 are enriched in low complexity; that stretch reads NKSENSSSSK. 2 consecutive C2H2-type zinc fingers follow at residues 570-594 and 600-622; these read YVCT…MNTH and FQCS…EQLH. The segment at 628–650 adopts a C2H2-type 3; degenerate zinc-finger fold; sequence FACVTCNQRFARMDALNRHYKSE. The interval 662 to 681 is disordered; the sequence is RGIQVPPSRKTAVASTSKQK.

It belongs to the EGR C2H2-type zinc-finger protein family. Post-translationally, phosphorylated. Dephosphorylated by calcineurin which leads to rapid translocation from the cytoplasm to the nucleus.

The protein resides in the nucleus. Its subcellular location is the cytoplasm. In terms of biological role, involved in the regulation of calcium ion homeostasis. Binds to the calcineurin-dependent response element. Transcriptionally regulates pmc1. The chain is Transcriptional regulator prz1 (prz1) from Schizosaccharomyces pombe (strain 972 / ATCC 24843) (Fission yeast).